The chain runs to 134 residues: Lymphocyte antigen 6F (134 aa).

A signal peptide spans 1–26 (MDSCHTTKSCVLILLVVLLCAERAQG). Residues 27 to 119 (LECYNCLGVS…TGGSTWTMTR (93 aa)) form the UPAR/Ly6 domain. 5 cysteine pairs are disulfide-bonded: Cys29–Cys53, Cys32–Cys41, Cys46–Cys74, Cys78–Cys98, and Cys99–Cys104. Gly112 carries the GPI-anchor amidated glycine lipid modification. The propeptide at 113–134 (STWTMTRVLLLNLGSVFLQTLL) is removed in mature form.

It is found in the cell membrane. The chain is Lymphocyte antigen 6F (Ly6f) from Mus musculus (Mouse).